The chain runs to 686 residues: DNA ligase (686 aa).

NAD(+) contacts are provided by residues 45–49, 94–95, and glutamate 127; these read DNEYD and SL. The active-site N6-AMP-lysine intermediate is lysine 129. NAD(+) is bound by residues arginine 150, glutamate 187, lysine 302, and lysine 326. Positions 420, 423, 438, and 444 each coordinate Zn(2+). The 82-residue stretch at 605-686 folds into the BRCT domain; sequence LDNLPLEGQT…DEFLKMIGAS (82 aa).

Belongs to the NAD-dependent DNA ligase family. LigA subfamily. It depends on Mg(2+) as a cofactor. The cofactor is Mn(2+).

The enzyme catalyses NAD(+) + (deoxyribonucleotide)n-3'-hydroxyl + 5'-phospho-(deoxyribonucleotide)m = (deoxyribonucleotide)n+m + AMP + beta-nicotinamide D-nucleotide.. Its function is as follows. DNA ligase that catalyzes the formation of phosphodiester linkages between 5'-phosphoryl and 3'-hydroxyl groups in double-stranded DNA using NAD as a coenzyme and as the energy source for the reaction. It is essential for DNA replication and repair of damaged DNA. The protein is DNA ligase of Psychrobacter sp. (strain PRwf-1).